A 249-amino-acid chain; its full sequence is Type-1Aa cytolytic delta-endotoxin (249 aa).

Belongs to the cyt1/cyt2 endotoxin family. In terms of processing, active after proteolytic processing.

In terms of biological role, kills the larvae of dipteran insects by making pores in the epithelial cell membrane of the insect midgut. Acts on mosquitos and black flies. The protein is Type-1Aa cytolytic delta-endotoxin (cyt1Aa) of Bacillus thuringiensis subsp. morrisoni.